Reading from the N-terminus, the 227-residue chain is UPF0173 metal-dependent hydrolase Saci_1512 (227 aa).

The protein belongs to the UPF0173 family.

This is UPF0173 metal-dependent hydrolase Saci_1512 from Sulfolobus acidocaldarius (strain ATCC 33909 / DSM 639 / JCM 8929 / NBRC 15157 / NCIMB 11770).